The primary structure comprises 347 residues: Nicotinate-nucleotide--dimethylbenzimidazole phosphoribosyltransferase (347 aa).

Glu316 serves as the catalytic Proton acceptor.

This sequence belongs to the CobT family.

It carries out the reaction 5,6-dimethylbenzimidazole + nicotinate beta-D-ribonucleotide = alpha-ribazole 5'-phosphate + nicotinate + H(+). It participates in nucleoside biosynthesis; alpha-ribazole biosynthesis; alpha-ribazole from 5,6-dimethylbenzimidazole: step 1/2. Functionally, catalyzes the synthesis of alpha-ribazole-5'-phosphate from nicotinate mononucleotide (NAMN) and 5,6-dimethylbenzimidazole (DMB). The protein is Nicotinate-nucleotide--dimethylbenzimidazole phosphoribosyltransferase of Vibrio campbellii (strain ATCC BAA-1116).